The primary structure comprises 299 residues: Transcription factor BHLH148 (299 aa).

Residues 90-127 (RMGGGGGGGEKGEGEEMEEEEEVPQRRRRGQGADVESS) are disordered. Residues 102–111 (EGEEMEEEEE) are compositionally biased toward acidic residues. The segment at 127–140 (SRGFRHMMRERQRR) is basic motif; degenerate. Residues 127-176 (SRGFRHMMRERQRREKLSQSYADLYAMVSSRSKGDKNSIVQSAAIYIHEL) form the bHLH domain. Residues 141–176 (EKLSQSYADLYAMVSSRSKGDKNSIVQSAAIYIHEL) form a helix-loop-helix motif region. The disordered stretch occupies residues 273-299 (ERNQPDSDAPFPGSKGWTQTSHVQNVF). Positions 288 to 299 (GWTQTSHVQNVF) are enriched in polar residues.

This sequence belongs to the bHLH protein family. Interacts with TIFY10A/JAZ6, TIFY10B/JAZ7, TIFY11A/JAZ9, TIFY11C/JAZ11, and TIFY11D/JAZ12.

It is found in the nucleus. May act on an initial response of jasmonate-regulated gene expression toward drought tolerance as part of a BHLH148-TIFY11D/JAZ12-COI1A complex. The sequence is that of Transcription factor BHLH148 from Oryza sativa subsp. japonica (Rice).